Reading from the N-terminus, the 299-residue chain is Pyrroline-5-carboxylate reductase 2 (299 aa).

It belongs to the pyrroline-5-carboxylate reductase family. As to quaternary structure, homodecamer; composed of 5 homodimers.

The catalysed reaction is L-proline + NADP(+) = (S)-1-pyrroline-5-carboxylate + NADPH + 2 H(+). It carries out the reaction L-proline + NAD(+) = (S)-1-pyrroline-5-carboxylate + NADH + 2 H(+). The protein operates within amino-acid biosynthesis; L-proline biosynthesis; L-proline from L-glutamate 5-semialdehyde: step 1/1. This chain is Pyrroline-5-carboxylate reductase 2 (pycr2), found in Dictyostelium discoideum (Social amoeba).